Here is a 133-residue protein sequence, read N- to C-terminus: Large-conductance mechanosensitive channel (133 aa).

2 helical membrane passes run 14 to 34 and 73 to 93; these read VVDLAVAVVIGAAFGTVVTTL and FITVLLNFVIIAAAIYFMVVV.

The protein belongs to the MscL family. As to quaternary structure, homopentamer.

The protein localises to the cell membrane. Channel that opens in response to stretch forces in the membrane lipid bilayer. May participate in the regulation of osmotic pressure changes within the cell. The sequence is that of Large-conductance mechanosensitive channel from Renibacterium salmoninarum (strain ATCC 33209 / DSM 20767 / JCM 11484 / NBRC 15589 / NCIMB 2235).